Consider the following 587-residue polypeptide: Adenine deaminase (587 aa).

The protein belongs to the metallo-dependent hydrolases superfamily. Adenine deaminase family. Requires Mn(2+) as cofactor.

It carries out the reaction adenine + H2O + H(+) = hypoxanthine + NH4(+). The protein is Adenine deaminase of Shewanella halifaxensis (strain HAW-EB4).